Here is a 175-residue protein sequence, read N- to C-terminus: Peptide deformylase (175 aa).

Fe cation contacts are provided by C92 and H134. E135 is a catalytic residue. H138 contacts Fe cation.

The protein belongs to the polypeptide deformylase family. It depends on Fe(2+) as a cofactor.

It carries out the reaction N-terminal N-formyl-L-methionyl-[peptide] + H2O = N-terminal L-methionyl-[peptide] + formate. Its function is as follows. Removes the formyl group from the N-terminal Met of newly synthesized proteins. Requires at least a dipeptide for an efficient rate of reaction. N-terminal L-methionine is a prerequisite for activity but the enzyme has broad specificity at other positions. The protein is Peptide deformylase of Blochmanniella floridana.